A 262-amino-acid polypeptide reads, in one-letter code: Nurim (262 aa).

At 1–4 the chain is on the nuclear side; it reads MAPA. Residues 5–28 form a helical membrane-spanning segment; it reads LLLVPAALASFILAFGTGVEFVRF. Residues 29 to 58 are Perinuclear space-facing; it reads TSLRPLLGGIPESGGPDARQGWLAALQDQS. Residues 59–80 form a helical membrane-spanning segment; the sequence is ILVPLAWDLGLLLLFVGQHSLM. Over 81–97 the chain is Nuclear; that stretch reads ATETVKAWMSRYFGVLQ. A helical membrane pass occupies residues 98–114; it reads RSLYVACTALALQLVMR. Over 115-133 the chain is Perinuclear space; it reads YWEPVPRGPVLWEAQAEPW. Residues 134-164 form a helical membrane-spanning segment; it reads ATWVPLLCFVLHVISWLLIFSILLVFDYAEL. At 165–191 the chain is on the nuclear side; the sequence is MGLKQVYYHVLGLGEPLALKSPRALRL. The chain crosses the membrane as a helical span at residues 192–210; the sequence is FSHLRHPVCVELLTVLWVV. At 211–216 the chain is on the perinuclear space side; it reads PTLGTD. The chain crosses the membrane as a helical span at residues 217-234; it reads RLLLALLLTLYLGLAHGL. Residues 235 to 262 are Nuclear-facing; sequence DQQDLRYLRAQLQRKLHLLSRPQDGEAE.

The protein belongs to the nurim family.

Its subcellular location is the nucleus inner membrane. The protein is Nurim (NRM) of Sus scrofa (Pig).